Consider the following 384-residue polypeptide: MVSTTFRRIVSPCWRPFGIGEDSSPGSDDTNGRLDGLLWYKDSGNHITGEFSMAVVQANNLLEDHSQLESGPISLHESGPEATFVGVYDGHGGPEAARFVNDRLFYNIKRYTSEQRGMSPDVITRGFVATEEEFLGLVQEQWKTKPQIASVGACCLVGIVCNGLLYVANAGDSRVVLGKVANPFKELKAVQLSTEHNASIESVREELRLLHPDDPNIVVLKHKVWRVKGIIQVSRSIGDAYLKRAEFNQEPLLPKFRVPERFEKPIMRAEPTITVHKIHPEDQFLIFASDGLWEHLSNQEAVDIVNSCPRNGVARKLVKAALQEAAKKREMRYSDLEKIERGIRRHFHDDITVIVVFLHATNFATRTPISVKGGGLLSAHNPVL.

Residues 47-358 (ITGEFSMAVV…DDITVIVVFL (312 aa)) enclose the PPM-type phosphatase domain. The residue at position 78 (Ser78) is a Phosphoserine. Residues Asp89, Gly90, Asp290, and Asp349 each coordinate Mn(2+).

This sequence belongs to the PP2C family. Mg(2+) serves as cofactor. Requires Mn(2+) as cofactor.

It carries out the reaction O-phospho-L-seryl-[protein] + H2O = L-seryl-[protein] + phosphate. The catalysed reaction is O-phospho-L-threonyl-[protein] + H2O = L-threonyl-[protein] + phosphate. In terms of biological role, may dephosphorylate and repress plasma membrane H(+)-ATPases (PM H(+)-ATPases, e.g. AHA1 and AHA2), thus influencing negatively plant growth and fitness. This Arabidopsis thaliana (Mouse-ear cress) protein is Probable protein phosphatase 2C 48.